We begin with the raw amino-acid sequence, 97 residues long: DNA-directed RNA polymerase subunit omega (97 aa).

Belongs to the RNA polymerase subunit omega family. As to quaternary structure, the RNAP catalytic core consists of 2 alpha, 1 beta, 1 beta' and 1 omega subunit. When a sigma factor is associated with the core the holoenzyme is formed, which can initiate transcription.

It carries out the reaction RNA(n) + a ribonucleoside 5'-triphosphate = RNA(n+1) + diphosphate. Functionally, promotes RNA polymerase assembly. Latches the N- and C-terminal regions of the beta' subunit thereby facilitating its interaction with the beta and alpha subunits. The polypeptide is DNA-directed RNA polymerase subunit omega (Corynebacterium glutamicum (strain ATCC 13032 / DSM 20300 / JCM 1318 / BCRC 11384 / CCUG 27702 / LMG 3730 / NBRC 12168 / NCIMB 10025 / NRRL B-2784 / 534)).